The primary structure comprises 359 residues: Histamine H2 receptor (359 aa).

Over 1 to 22 the chain is Extracellular; the sequence is MISNGTGSSFCLDSPPCRITVS. The N-linked (GlcNAc...) asparagine glycan is linked to N4. The helical transmembrane segment at 23-44 threads the bilayer; it reads VVLTVLILITIAGNVVVCLAVG. Topologically, residues 45–57 are cytoplasmic; the sequence is LNRRLRSLTNCFI. A helical membrane pass occupies residues 58 to 81; it reads VSLAITDLLLGLLVLPFSAFYQLS. The Extracellular portion of the chain corresponds to 82 to 92; that stretch reads CRWSFGKVFCN. A disulfide bridge connects residues C91 and C174. A helical transmembrane segment spans residues 93–114; it reads IYTSLDVMLCTASILNLFMISL. Over 115–134 the chain is Cytoplasmic; that stretch reads DRYCAVTDPLRYPVLITPVR. Residues 135-159 form a helical membrane-spanning segment; the sequence is VAVSLVLIWVISITLSFLSIHLGWN. The Extracellular portion of the chain corresponds to 160–180; that stretch reads SRNETSSFNHTIPKCKVQVNL. Residues 181–204 form a helical membrane-spanning segment; it reads VYGLVDGLVTFYLPLLVMCITYYR. Topologically, residues 205-234 are cytoplasmic; sequence IFKIARDQAKRIHHMGSWKAATIGEHKATV. A helical membrane pass occupies residues 235 to 258; the sequence is TLAAVMGAFIICWFPYFTVFVYRG. Over 259-267 the chain is Extracellular; that stretch reads LKGDDAINE. Residues 268–289 form a helical membrane-spanning segment; sequence AFEAVVLWLGYANSALNPILYA. Residues 290 to 359 lie on the Cytoplasmic side of the membrane; that stretch reads TLNRDFRTAY…VTAPRGATDR (70 aa). Residue C305 is the site of S-palmitoyl cysteine attachment. Residues 310-327 show a composition bias toward polar residues; sequence HNAQETSLRSNSSQLARN. The tract at residues 310–359 is disordered; it reads HNAQETSLRSNSSQLARNQSREPMRQEEKPLKLQVWSGTEVTAPRGATDR. Basic and acidic residues predominate over residues 328–340; that stretch reads QSREPMRQEEKPL.

This sequence belongs to the G-protein coupled receptor 1 family. In terms of tissue distribution, gastric fundus and, to a lesser extent, in brain.

The protein localises to the cell membrane. In terms of biological role, the H2 subclass of histamine receptors mediates gastric acid secretion. The activity of this receptor is mediated by G proteins which activate adenylyl cyclase. This Canis lupus familiaris (Dog) protein is Histamine H2 receptor (HRH2).